The sequence spans 309 residues: Non-homologous end-joining factor 1 (309 aa).

The tract at residues 1 to 134 is globular head; the sequence is MEAVLSALPW…TPVAVVCRQL (134 aa). The interval 223 to 298 is C-terminal tail; it reads GKTGRKRKHS…AGSEDRSTSR (76 aa). A disordered region spans residues 223 to 309; sequence GKTGRKRKHS…KKKKAVGLFR (87 aa). Residues 243 to 252 are compositionally biased toward basic and acidic residues; the sequence is HITDHQHISE. Composition is skewed to polar residues over residues 253–265 and 273–290; these read STDV…SQEH and RSQV…STAG. The span at 297–309 shows a compositional bias: basic residues; that stretch reads SRAKKKKAVGLFR. The XLM signature appears at 299–309; it reads AKKKKAVGLFR.

This sequence belongs to the XRCC4-XLF family. XLF subfamily. As to quaternary structure, homodimer. Interacts with xrcc4; the interaction is direct and is mediated via a head-to-head interaction between N-terminal head regions. Component of the core long-range non-homologous end joining (NHEJ) complex (also named DNA-PK complex) composed of prkdc/DNA-PKcs, lig4, xrcc4, xrcc6/Ku70, xrcc5/Ku80 and nhej1/xlf.

It localises to the nucleus. It is found in the chromosome. DNA repair protein involved in DNA non-homologous end joining (NHEJ); it is required for double-strand break (DSB) repair and V(D)J recombination and is also involved in telomere maintenance. Plays a key role in NHEJ by promoting the ligation of various mismatched and non-cohesive ends. In some studies, has been shown to associate with xrcc4 to form alternating helical filaments that bridge DNA and act like a bandage, holding together the broken DNA until it is repaired. Alternatively, it has also been shown that rather than forming filaments, a single nhej1 dimer interacts through both head domains with xrcc4 to promote the close alignment of DNA ends. The xrcc4-nhej1/xlf subcomplex binds to the DNA fragments of a DSB in a highly diffusive manner and robustly bridges two independent DNA molecules, holding the broken DNA fragments in close proximity to one other. The mobility of the bridges ensures that the ends remain accessible for further processing by other repair factors. This is Non-homologous end-joining factor 1 (nhej1) from Danio rerio (Zebrafish).